The primary structure comprises 219 residues: 2-hydroxy-3-keto-5-methylthiopentenyl-1-phosphate phosphatase (219 aa).

Belongs to the HAD-like hydrolase superfamily. MtnX family.

The enzyme catalyses 2-hydroxy-5-methylsulfanyl-3-oxopent-1-enyl phosphate + H2O = 1,2-dihydroxy-5-(methylsulfanyl)pent-1-en-3-one + phosphate. It participates in amino-acid biosynthesis; L-methionine biosynthesis via salvage pathway; L-methionine from S-methyl-5-thio-alpha-D-ribose 1-phosphate: step 4/6. In terms of biological role, dephosphorylates 2-hydroxy-3-keto-5-methylthiopentenyl-1-phosphate (HK-MTPenyl-1-P) yielding 1,2-dihydroxy-3-keto-5-methylthiopentene (DHK-MTPene). This chain is 2-hydroxy-3-keto-5-methylthiopentenyl-1-phosphate phosphatase, found in Bacillus cereus (strain G9842).